Here is a 439-residue protein sequence, read N- to C-terminus: Xylose isomerase (439 aa).

Residues His101 and Asp104 contribute to the active site. 7 residues coordinate Mg(2+): Glu232, Glu268, His271, Asp296, Asp307, Asp309, and Asp339.

It belongs to the xylose isomerase family. As to quaternary structure, homotetramer. The cofactor is Mg(2+).

The protein resides in the cytoplasm. It catalyses the reaction alpha-D-xylose = alpha-D-xylulofuranose. This Pectobacterium atrosepticum (strain SCRI 1043 / ATCC BAA-672) (Erwinia carotovora subsp. atroseptica) protein is Xylose isomerase.